A 433-amino-acid polypeptide reads, in one-letter code: Serine/threonine-protein kinase KDX1 (433 aa).

The Protein kinase domain maps to 23 to 318 (FHLTGKIGRG…VEDALEHPYL (296 aa)). Residues 29-37 (IGRGSHSLI) and Lys-55 contribute to the ATP site. Asp-153 functions as the Proton acceptor in the catalytic mechanism.

The protein belongs to the protein kinase superfamily. Ser/Thr protein kinase family. In terms of assembly, interacts with RLM1.

The enzyme catalyses L-seryl-[protein] + ATP = O-phospho-L-seryl-[protein] + ADP + H(+). It catalyses the reaction L-threonyl-[protein] + ATP = O-phospho-L-threonyl-[protein] + ADP + H(+). Functionally, serine/threonine-protein kinase involved in the SLT2 mitogen-activated (MAP) kinase signaling pathway that regulates cell wall integrity. May also be involved in the mating pheromone and the CWI MAPK pathways. This chain is Serine/threonine-protein kinase KDX1 (KDX1), found in Saccharomyces cerevisiae (strain ATCC 204508 / S288c) (Baker's yeast).